Here is a 132-residue protein sequence, read N- to C-terminus: DNA-binding protein inhibitor ID-2 (132 aa).

The bHLH domain maps to 23–75 (ARSKTPVDDPMSLLYNMNDCYSKLKELVPSIPQNKKVSKMEILQHVIDYILDL). The short motif at 105 to 114 (LNTDISILSL) is the Nuclear export signal element.

In terms of assembly, heterodimer with other HLH proteins.

The protein localises to the cytoplasm. Its subcellular location is the nucleus. Transcriptional regulator (lacking a basic DNA binding domain) which negatively regulates the basic helix-loop-helix (bHLH) transcription factors by forming heterodimers and inhibiting their DNA binding and transcriptional activity. Inhibits the activity of both neurogenic (neurod1/neuroD) and myogenic (myod1/myoD) bHLH factors. May play a role in the regulation of the circadian clock. This Xenopus tropicalis (Western clawed frog) protein is DNA-binding protein inhibitor ID-2.